We begin with the raw amino-acid sequence, 95 residues long: Acylphosphatase (95 aa).

The Acylphosphatase-like domain occupies 6-94 (RVRVIVKGIV…EDFTGFSVRY (89 aa)). Active-site residues include arginine 21 and asparagine 39.

The protein belongs to the acylphosphatase family.

The catalysed reaction is an acyl phosphate + H2O = a carboxylate + phosphate + H(+). This is Acylphosphatase (acyP) from Caldivirga maquilingensis (strain ATCC 700844 / DSM 13496 / JCM 10307 / IC-167).